The sequence spans 153 residues: Large ribosomal subunit protein uL15 (153 aa).

Residues 21–41 (RGIGSGKGKTGGRGIKGQKSR) are disordered. Residues 23 to 35 (IGSGKGKTGGRGI) are compositionally biased toward gly residues.

It belongs to the universal ribosomal protein uL15 family. In terms of assembly, part of the 50S ribosomal subunit.

Binds to the 23S rRNA. The chain is Large ribosomal subunit protein uL15 from Rickettsia felis (strain ATCC VR-1525 / URRWXCal2) (Rickettsia azadi).